We begin with the raw amino-acid sequence, 52 residues long: UPF0391 membrane protein Tgr7_2500 (52 aa).

2 helical membrane-spanning segments follow: residues 4 to 24 (WALI…SGVA) and 29 to 49 (WIAQ…LLGG).

Belongs to the UPF0391 family.

The protein localises to the cell membrane. The sequence is that of UPF0391 membrane protein Tgr7_2500 from Thioalkalivibrio sulfidiphilus (strain HL-EbGR7).